The primary structure comprises 232 residues: Octanoyltransferase (232 aa).

Residues 33–216 (GRAQDTVILL…HLVRALSNGS (184 aa)) form the BPL/LPL catalytic domain. Substrate is bound by residues 71-78 (RGGRITWH), 146-148 (AIG), and 159-161 (GFA). Cys-177 acts as the Acyl-thioester intermediate in catalysis.

Belongs to the LipB family.

The protein localises to the cytoplasm. The enzyme catalyses octanoyl-[ACP] + L-lysyl-[protein] = N(6)-octanoyl-L-lysyl-[protein] + holo-[ACP] + H(+). The protein operates within protein modification; protein lipoylation via endogenous pathway; protein N(6)-(lipoyl)lysine from octanoyl-[acyl-carrier-protein]: step 1/2. Catalyzes the transfer of endogenously produced octanoic acid from octanoyl-acyl-carrier-protein onto the lipoyl domains of lipoate-dependent enzymes. Lipoyl-ACP can also act as a substrate although octanoyl-ACP is likely to be the physiological substrate. The protein is Octanoyltransferase of Clavibacter sepedonicus (Clavibacter michiganensis subsp. sepedonicus).